The chain runs to 162 residues: Endoribonuclease YbeY (162 aa).

Positions 130, 134, and 140 each coordinate Zn(2+).

This sequence belongs to the endoribonuclease YbeY family. It depends on Zn(2+) as a cofactor.

It localises to the cytoplasm. Single strand-specific metallo-endoribonuclease involved in late-stage 70S ribosome quality control and in maturation of the 3' terminus of the 16S rRNA. This is Endoribonuclease YbeY from Nitratidesulfovibrio vulgaris (strain ATCC 29579 / DSM 644 / CCUG 34227 / NCIMB 8303 / VKM B-1760 / Hildenborough) (Desulfovibrio vulgaris).